We begin with the raw amino-acid sequence, 170 residues long: Calcineurin subunit B type 2 (170 aa).

The N-myristoyl glycine moiety is linked to residue glycine 2. 4 EF-hand domains span residues 18–46 (DEIKRLRKRFKKLDLDSSSALSVKEFTSM), 50–85 (QENPLVQRVIDVFDTDGDGQVDFREFILGTSQFSVR), 87–122 (DEEQKLRFAFSIYDMDKDGYISNGELFQVLKMMVGD), and 128–163 (QLQQLVDKTIILLDKDGDGKISFQEFSAVVRSLEIH). Ca(2+) is bound by residues aspartate 63, aspartate 65, aspartate 67, glutamine 69, glutamate 74, aspartate 100, aspartate 102, aspartate 104, tyrosine 106, and glutamate 111. The tract at residues 131 to 136 (QLVDKT) is calcineurin A binding. Residues aspartate 141, aspartate 143, aspartate 145, lysine 147, and glutamate 152 each coordinate Ca(2+).

This sequence belongs to the calcineurin regulatory subunit family. As to quaternary structure, forms a complex composed of a calmodulin-dependent catalytic subunit (also known as calcineurin A) and a regulatory Ca(2+)-binding subunit (also known as calcineurin B). There are three catalytic subunits, each encoded by a separate gene (PPP3CA, PPP3CB, and PPP3CC) and two regulatory subunits which are also encoded by separate genes (PPP3R1 and PPP3R2). Interacts with SPATA33 (via PQIIIT motif).

The protein resides in the mitochondrion. Regulatory subunit of calcineurin, a calcium-dependent, calmodulin stimulated protein phosphatase. Confers calcium sensitivity. The chain is Calcineurin subunit B type 2 (PPP3R2) from Bos taurus (Bovine).